Reading from the N-terminus, the 515-residue chain is Lysine--tRNA ligase (515 aa).

The Mg(2+) site is built by E422 and E429.

It belongs to the class-II aminoacyl-tRNA synthetase family. As to quaternary structure, homodimer. Requires Mg(2+) as cofactor.

The protein resides in the cytoplasm. The enzyme catalyses tRNA(Lys) + L-lysine + ATP = L-lysyl-tRNA(Lys) + AMP + diphosphate. This chain is Lysine--tRNA ligase, found in Clostridium acetobutylicum (strain ATCC 824 / DSM 792 / JCM 1419 / IAM 19013 / LMG 5710 / NBRC 13948 / NRRL B-527 / VKM B-1787 / 2291 / W).